The sequence spans 296 residues: 5,10-methylenetetrahydrofolate reductase (296 aa).

Glutamate 28 acts as the Proton donor/acceptor in catalysis. Position 59 (threonine 59) interacts with NADH. FAD contacts are provided by tyrosine 60, alanine 62, histidine 88, arginine 118, glycine 119, aspartate 120, alanine 132, tyrosine 152, histidine 156, alanine 159, aspartate 165, asparagine 168, arginine 171, and lysine 172. Aspartate 120 is a (6S)-5-methyl-5,6,7,8-tetrahydrofolate binding site. Glutamine 183 serves as a coordination point for NADH. (6S)-5-methyl-5,6,7,8-tetrahydrofolate-binding residues include glutamine 183, glutamine 219, and arginine 279.

Belongs to the methylenetetrahydrofolate reductase family. Requires FAD as cofactor.

It catalyses the reaction (6S)-5-methyl-5,6,7,8-tetrahydrofolate + NAD(+) = (6R)-5,10-methylene-5,6,7,8-tetrahydrofolate + NADH + H(+). The protein operates within one-carbon metabolism; tetrahydrofolate interconversion. It participates in amino-acid biosynthesis; L-methionine biosynthesis via de novo pathway. In terms of biological role, catalyzes the NADH-dependent reduction of 5,10-methylenetetrahydrofolate to 5-methyltetrahydrofolate. Is required to provide the methyl group necessary for methionine synthetase to convert homocysteine to methionine; the methyl group is given by 5-methyltetrahydrofolate. The chain is 5,10-methylenetetrahydrofolate reductase (metF) from Salmonella typhimurium (strain LT2 / SGSC1412 / ATCC 700720).